The chain runs to 477 residues: Homeobox protein Meis2 (477 aa).

Residues 71-191 (DALKRDKDAI…KMPIDLVIDE (121 aa)) are required for interaction with PBX1. An MEIS N-terminal domain is found at 110 to 193 (GGDVCSSDSF…PIDLVIDERD (84 aa)). The span at 193–203 (DGSSKSDHEEL) shows a compositional bias: basic and acidic residues. Residues 193-283 (DGSSKSDHEE…KKRQKKRGIF (91 aa)) form a disordered region. Composition is skewed to polar residues over residues 204–217 (SGSS…NPSS) and 239–251 (GHAS…SSEQ). A DNA-binding region (homeobox; TALE-type) is located at residues 276 to 338 (RQKKRGIFPK…NARRRIVQPM (63 aa)). Positions 299 to 333 (LTHPYPSEEQKKQLAQDTGLTILQVNNWFINARRR) are interaction with DNA. A transcriptional activation domain region spans residues 340–477 (DQSNRAGFLL…GGQVMDIHAQ (138 aa)).

The protein belongs to the TALE/MEIS homeobox family. In terms of assembly, monomer and homodimer. Heterodimer with HOXB13. Isoform Meis2A interacts with TLX1. Isoform Meis2B interacts with HOXA13 and PBX1 isoform PBX1b. Isoform Meis2D interacts with SP1, SP3 and KLF4. Isoform Meis2D interacts with PBX1 isoform PBX1a; the interaction partially relieves MEIS2 autoinhibition. Isoform Meis2B is part of a PDX1:PBX1b:MEIS2b complex; Meis2B is recruited by PBX1b and can be replaced by isoform Meis2D in a small fraction of complexes. Can form trimeric complexes including HOXB8 and PBX2 or PBX3. As to expression, displays spatially restricted expression patterns in the developing nervous system, limbs, face, and in various viscera. In adult, it is mainly expressed in the brain and female genital tract, with a different distribution of the alternative splice forms in these organs. Lower expression in lung and only basal level in heart, liver, kidney, spleen, and testis. Expressed in pancreatic islets (beta-cells only).

The protein resides in the nucleus. The protein localises to the cytoplasm. It localises to the perinuclear region. Its function is as follows. Involved in transcriptional regulation. Binds to HOX or PBX proteins to form dimers, or to a DNA-bound dimer of PBX and HOX proteins and thought to have a role in stabilization of the homeoprotein-DNA complex. Isoform Meis2B is required for the activity of a PDX1:PBX1b:MEIS2b complex in pancreatic acinar cells involved in the transcriptional activation of the ELA1 enhancer; the complex binds to the enhancer B element and cooperates with the transcription factor 1 complex (PTF1) bound to the enhancer A element; MEIS2 is not involved in complex DNA-binding. Probably in complex with PBX1, is involved in transcriptional regulation by KLF4. Isoforms Meis2B and Meis2D can bind to a EPHA8 promoter sequence containing the DNA motif 5'-CGGTCA-3'; in cooperation with a PBX protein (such as PBX2) is proposed to be involved in the transcriptional activation of EPHA8 in the developing midbrain. May be involved in regulation of myeloid differentiation. Can bind to the DNA sequence 5'-TGACAG-3'in the activator ACT sequence of the D(1A) dopamine receptor (DRD1) promoter and activate DRD1 transcription. This Mus musculus (Mouse) protein is Homeobox protein Meis2 (Meis2).